The chain runs to 165 residues: Lipoprotein signal peptidase (165 aa).

A run of 3 helical transmembrane segments spans residues Phe9–Tyr29, Lys69–Leu89, and Ile98–Phe118. Residues Asp124 and Asp142 contribute to the active site. Residues Trp133–Val153 traverse the membrane as a helical segment.

The protein belongs to the peptidase A8 family.

Its subcellular location is the cell inner membrane. It carries out the reaction Release of signal peptides from bacterial membrane prolipoproteins. Hydrolyzes -Xaa-Yaa-Zaa-|-(S,diacylglyceryl)Cys-, in which Xaa is hydrophobic (preferably Leu), and Yaa (Ala or Ser) and Zaa (Gly or Ala) have small, neutral side chains.. It participates in protein modification; lipoprotein biosynthesis (signal peptide cleavage). In terms of biological role, this protein specifically catalyzes the removal of signal peptides from prolipoproteins. The chain is Lipoprotein signal peptidase from Chlamydia caviae (strain ATCC VR-813 / DSM 19441 / 03DC25 / GPIC) (Chlamydophila caviae).